The chain runs to 135 residues: MADFTVLDKQDEIYNVIDKKKAEGYSENELVVVSKSKLHLDNLHDSQVTLIATSGSFSDRMSKLLTGEDGEEAVLARYELSEEQTEKYKKDILDGKFLVIANKDNSSHDEVEENNSAYEEIDITHYANESKGPKS.

The segment at 105–135 is disordered; that stretch reads NSSHDEVEENNSAYEEIDITHYANESKGPKS.

The protein belongs to the UPF0355 family.

In Staphylococcus haemolyticus (strain JCSC1435), this protein is UPF0355 protein SH2586.